A 1291-amino-acid chain; its full sequence is Cytoplasmic FMR1-interacting protein (1291 aa).

A disordered region spans residues 1269–1291; the sequence is HPSVISSSSHYQDPQKLRQSMNN. The segment covering 1271 to 1291 has biased composition (polar residues); that stretch reads SVISSSSHYQDPQKLRQSMNN.

It belongs to the CYFIP family. Interacts with Fmr1 and Rac1. Component of the WAVE complex composed of Hem/Kette, Scar/Wave and Cyfip where it binds through its C-terminus directly to Hem.

It localises to the cytoplasm. Its function is as follows. Plays a role in guidance and morphology of central and peripheral axons and in synaptic morphology. Also required for formation of cell membrane protrusions and for bristle development. In Drosophila pseudoobscura pseudoobscura (Fruit fly), this protein is Cytoplasmic FMR1-interacting protein.